Reading from the N-terminus, the 1354-residue chain is Phosphoribosylformylglycinamidine synthase (1354 aa).

ATP-binding positions include 327-338, 407-409, and A714; these read GATTGTGGRLRD and SGF. Positions 715, 754, 758, and 918 each coordinate Mg(2+). Residue S920 participates in ATP binding. A Glutamine amidotransferase type-1 domain is found at 1087-1337; that stretch reads VAVLREEGVN…EVSPTQSESP (251 aa). The active-site Nucleophile is the C1180. Catalysis depends on residues H1310 and E1312.

In the N-terminal section; belongs to the FGAMS family.

It catalyses the reaction N(2)-formyl-N(1)-(5-phospho-beta-D-ribosyl)glycinamide + L-glutamine + ATP + H2O = 2-formamido-N(1)-(5-O-phospho-beta-D-ribosyl)acetamidine + L-glutamate + ADP + phosphate + H(+). It functions in the pathway purine metabolism; IMP biosynthesis via de novo pathway; 5-amino-1-(5-phospho-D-ribosyl)imidazole from N(2)-formyl-N(1)-(5-phospho-D-ribosyl)glycinamide: step 1/2. In terms of biological role, phosphoribosylformylglycinamidine synthase involved in the purines biosynthetic pathway. Catalyzes the ATP-dependent conversion of formylglycinamide ribonucleotide (FGAR) and glutamine to yield formylglycinamidine ribonucleotide (FGAM) and glutamate. Because of its role in metabolisms, is involved in sleep regulation. The sequence is that of Phosphoribosylformylglycinamidine synthase from Drosophila melanogaster (Fruit fly).